Consider the following 474-residue polypeptide: TOM1-like protein 1 (474 aa).

The region spanning 22 to 154 (ATFAGVLTED…DLLKKGVQFP (133 aa)) is the VHS domain. Residues 153–180 (FPPSDGEPETRQEAGQISPNRPTSVPTA) are disordered. Residues 165–178 (EAGQISPNRPTSVP) show a composition bias toward polar residues. Position 170 is a phosphoserine (Ser170). A GAT domain is found at 199 to 287 (EQIGKLHSEL…AVLGYERFTR (89 aa)). The tract at residues 291–317 (RLLEQKRNRTEATRTSSEPSAPSCDLL) is disordered. The span at 293-302 (LEQKRNRTEA) shows a compositional bias: basic and acidic residues. Phosphoserine is present on residues Ser313 and Ser320. Positions 392–395 (YDNF) are interaction with GRB2. The SH3-binding signature appears at 420–424 (LPPLP). Residues 441–444 (YEVM) form an interaction with PIK3R1 region. Phosphotyrosine is present on Tyr457. The SH2-binding motif lies at 457–460 (YEEI).

Belongs to the TOM1 family. In terms of assembly, interacts with LYN. Interacts with the SH2 and SH3 domains of FYN when phosphorylated. Also interacts with GRB2 and PIK3R1 when phosphorylated. In terms of processing, phosphorylated on tyrosines by LYN. Phosphorylated on tyrosines by FYN. Strongly expressed in brain and kidney, expressed at intermediate levels skin and heart, and weakly expressed in thymus. Not expressed in liver and spleen.

The protein localises to the golgi apparatus. It is found in the golgi stack. It localises to the endosome membrane. Its subcellular location is the cytoplasm. The protein resides in the membrane. Functionally, probable adapter protein involved in signaling pathways. Interacts with the SH2 and SH3 domains of various signaling proteins when it is phosphorylated. May promote FYN activation, possibly by disrupting intramolecular SH3-dependent interactions. The sequence is that of TOM1-like protein 1 (Tom1l1) from Mus musculus (Mouse).